The sequence spans 534 residues: Cytochrome P450 monooxygenase AN1598 (534 aa).

N-linked (GlcNAc...) asparagine glycosylation is present at N3. Residues 25-45 traverse the membrane as a helical segment; that stretch reads LYLEILGVLSVVYLLQTLVAY. An N-linked (GlcNAc...) asparagine glycan is attached at N95. Residue C464 coordinates heme. N-linked (GlcNAc...) asparagine glycosylation occurs at N498.

Belongs to the cytochrome P450 family. It depends on heme as a cofactor.

The protein localises to the membrane. Its pathway is secondary metabolite biosynthesis; terpenoid biosynthesis. Functionally, bifunctional terpene synthase; part of the gene cluster that mediates the biosynthesis of the diterpene ent-pimara-8(14),15-diene (PD). Within the cluster, the HMG-CoA reductase AN1593 functions in the mevalonate pathway, which produces isoprenoid precursors. The geranylgeranyl pyrophosphate (GGPP) synthase AN1592 is needed in the formation of GGPP, the precursor for diterpenes. Lastly, the pimaradiene synthase pbcA performs the 2 cyclization steps that convert GGPP to ent-pimara-8(14),15-diene. The putative roles of the remaining cluster enzymes in ent-pimara-8(14),15-diene biosynthesis is unclear. The cytochrome P450 monooxygenase AN1598, the glutathione S-transferase AN1595, the oxidoreductases AN1596 and AN1597 probably function as decorative enzymes. It is possible that in biological conditions the compound is oxidized to ent-pimara-8(14),15-dien-19-oic acid, which is a bioactive diterpene compound predominant in many plant extracts. In Emericella nidulans (strain FGSC A4 / ATCC 38163 / CBS 112.46 / NRRL 194 / M139) (Aspergillus nidulans), this protein is Cytochrome P450 monooxygenase AN1598.